Consider the following 156-residue polypeptide: Cytochrome c-type biogenesis protein CcmE 1 (156 aa).

The Cytoplasmic portion of the chain corresponds to 1–8 (MNATRKQR). The chain crosses the membrane as a helical; Signal-anchor for type II membrane protein span at residues 9–29 (LCLVIGVLAAAALAVTLIVFA). At 30 to 156 (LQRNMSYLFT…ATAAPLTTPR (127 aa)) the chain is on the periplasmic side. 2 residues coordinate heme: H123 and Y127.

It belongs to the CcmE/CycJ family.

Its subcellular location is the cell inner membrane. In terms of biological role, heme chaperone required for the biogenesis of c-type cytochromes. Transiently binds heme delivered by CcmC and transfers the heme to apo-cytochromes in a process facilitated by CcmF and CcmH. This chain is Cytochrome c-type biogenesis protein CcmE 1, found in Xanthomonas oryzae pv. oryzae (strain MAFF 311018).